Here is a 442-residue protein sequence, read N- to C-terminus: Pentatricopeptide repeat-containing protein At2g27800, mitochondrial (442 aa).

The transit peptide at 1–67 (MSATRSTFLG…SFLPSIHVRF (67 aa)) directs the protein to the mitochondrion. 6 PPR repeats span residues 206–236 (NENLYNSIIFYFTKAGKLIRAVNIFRHMVTS), 244–286 (TIRT…GIEP), 287–322 (DVFALNCLVKGYVLSLHVNDALRIFHQMSVVYDCEP), 323–357 (NSFTYDYLIHGLCAQGRTINARELLSEMKGKGFVP), 358–392 (NGKSYNSLVNAFALSGEIDDAVKCLWEMIENGRVV), and 393–427 (DFISYRTLVDESCRKGKYDEATRLLEMLREKQLVD).

The protein belongs to the PPR family. P subfamily.

It localises to the mitochondrion. The polypeptide is Pentatricopeptide repeat-containing protein At2g27800, mitochondrial (Arabidopsis thaliana (Mouse-ear cress)).